Here is a 241-residue protein sequence, read N- to C-terminus: Uridylate kinase (241 aa).

15–18 (KLSG) serves as a coordination point for ATP. The involved in allosteric activation by GTP stretch occupies residues 23–28 (GAEGFG). Gly57 provides a ligand contact to UMP. Positions 58 and 62 each coordinate ATP. UMP is bound by residues Asp77 and 138 to 145 (TGNPFFTT). 3 residues coordinate ATP: Thr165, Tyr171, and Asp174.

It belongs to the UMP kinase family. Homohexamer.

The protein localises to the cytoplasm. The enzyme catalyses UMP + ATP = UDP + ADP. Its pathway is pyrimidine metabolism; CTP biosynthesis via de novo pathway; UDP from UMP (UMPK route): step 1/1. Allosterically activated by GTP. Inhibited by UTP. Functionally, catalyzes the reversible phosphorylation of UMP to UDP. The protein is Uridylate kinase of Serratia proteamaculans (strain 568).